A 301-amino-acid polypeptide reads, in one-letter code: Protease HtpX (301 aa).

2 helical membrane passes run 4–24 and 38–58; these read IGLF…ILSL and LGNL…ISLL. Residue histidine 147 coordinates Zn(2+). Glutamate 148 is an active-site residue. Residue histidine 151 coordinates Zn(2+). 2 consecutive transmembrane segments (helical) span residues 155–175 and 200–220; these read GDMV…MFFA and FAIT…IVMW. Glutamate 226 lines the Zn(2+) pocket.

Belongs to the peptidase M48B family. Requires Zn(2+) as cofactor.

Its subcellular location is the cell inner membrane. The sequence is that of Protease HtpX from Acinetobacter baylyi (strain ATCC 33305 / BD413 / ADP1).